The chain runs to 691 residues: DNA ligase (691 aa).

Residues 41-45, 90-91, and Glu-130 contribute to the NAD(+) site; these read DAEYD and SL. The active-site N6-AMP-lysine intermediate is the Lys-132. Residues Arg-153, Glu-190, Lys-307, and Lys-331 each coordinate NAD(+). Residues Cys-425, Cys-428, Cys-443, and Cys-449 each coordinate Zn(2+). One can recognise a BRCT domain in the interval 610 to 691; that stretch reads APQGVLAGKT…MHKLLEGHAR (82 aa).

This sequence belongs to the NAD-dependent DNA ligase family. LigA subfamily. Mg(2+) serves as cofactor. Requires Mn(2+) as cofactor.

The enzyme catalyses NAD(+) + (deoxyribonucleotide)n-3'-hydroxyl + 5'-phospho-(deoxyribonucleotide)m = (deoxyribonucleotide)n+m + AMP + beta-nicotinamide D-nucleotide.. In terms of biological role, DNA ligase that catalyzes the formation of phosphodiester linkages between 5'-phosphoryl and 3'-hydroxyl groups in double-stranded DNA using NAD as a coenzyme and as the energy source for the reaction. It is essential for DNA replication and repair of damaged DNA. This is DNA ligase from Burkholderia thailandensis (strain ATCC 700388 / DSM 13276 / CCUG 48851 / CIP 106301 / E264).